Reading from the N-terminus, the 615-residue chain is Gluconate 2-dehydrogenase flavoprotein (615 aa).

Residues 1–22 form the signal peptide; it reads MERGERVSVPVSGYSRGEGVTV. His-542 functions as the Proton acceptor in the catalytic mechanism.

This sequence belongs to the GMC oxidoreductase family. Heterotrimer. FAD serves as cofactor.

The protein localises to the cell membrane. The catalysed reaction is D-gluconate + A = 2-dehydro-D-gluconate + AH2. Part of the heterotrimer that catalyzes the conversion of D-gluconate to 2-dehydro-D-gluconate. This subunit functions as the dehydrogenase. The protein is Gluconate 2-dehydrogenase flavoprotein of Pantoea cypripedii (Pectobacterium cypripedii).